A 466-amino-acid chain; its full sequence is UDP-N-acetylmuramoylalanine--D-glutamate ligase (466 aa).

Residue 139-145 (GTAGKGG) coordinates ATP.

The protein belongs to the MurCDEF family.

It is found in the cytoplasm. The enzyme catalyses UDP-N-acetyl-alpha-D-muramoyl-L-alanine + D-glutamate + ATP = UDP-N-acetyl-alpha-D-muramoyl-L-alanyl-D-glutamate + ADP + phosphate + H(+). Its pathway is cell wall biogenesis; peptidoglycan biosynthesis. In terms of biological role, cell wall formation. Catalyzes the addition of glutamate to the nucleotide precursor UDP-N-acetylmuramoyl-L-alanine (UMA). This is UDP-N-acetylmuramoylalanine--D-glutamate ligase from Deinococcus geothermalis (strain DSM 11300 / CIP 105573 / AG-3a).